The primary structure comprises 437 residues: Enolase (437 aa).

Residue Gln-162 participates in (2R)-2-phosphoglycerate binding. Glu-204 acts as the Proton donor in catalysis. Asp-251, Glu-297, and Asp-324 together coordinate Mg(2+). (2R)-2-phosphoglycerate contacts are provided by Lys-349, Arg-378, Ser-379, and Lys-400. Lys-349 acts as the Proton acceptor in catalysis.

Belongs to the enolase family. The cofactor is Mg(2+).

It localises to the cytoplasm. The protein localises to the secreted. The protein resides in the cell surface. The catalysed reaction is (2R)-2-phosphoglycerate = phosphoenolpyruvate + H2O. Its pathway is carbohydrate degradation; glycolysis; pyruvate from D-glyceraldehyde 3-phosphate: step 4/5. Catalyzes the reversible conversion of 2-phosphoglycerate (2-PG) into phosphoenolpyruvate (PEP). It is essential for the degradation of carbohydrates via glycolysis. The sequence is that of Enolase from Chlorobium chlorochromatii (strain CaD3).